We begin with the raw amino-acid sequence, 159 residues long: UPF0260 protein Avi_1324 (159 aa).

Belongs to the UPF0260 family.

In Allorhizobium ampelinum (strain ATCC BAA-846 / DSM 112012 / S4) (Agrobacterium vitis (strain S4)), this protein is UPF0260 protein Avi_1324.